A 658-amino-acid chain; its full sequence is Translation factor GUF1, mitochondrial (658 aa).

A mitochondrion-targeting transit peptide spans 1–40 (MRGCLQTVRWLTSAWQRPPSYPPLSRAAPCRFFNVSIPRN). The tr-type G domain maps to 60-240 (DRFRNFCIVA…TVVEQIPAPV (181 aa)). GTP contacts are provided by residues 69-76 (AHVDHGKS), 133-137 (DTPGH), and 187-190 (NKVD).

The protein belongs to the TRAFAC class translation factor GTPase superfamily. Classic translation factor GTPase family. LepA subfamily.

It is found in the mitochondrion inner membrane. The enzyme catalyses GTP + H2O = GDP + phosphate + H(+). In terms of biological role, promotes mitochondrial protein synthesis. May act as a fidelity factor of the translation reaction, by catalyzing a one-codon backward translocation of tRNAs on improperly translocated ribosomes. Binds to mitochondrial ribosomes in a GTP-dependent manner. The polypeptide is Translation factor GUF1, mitochondrial (Paracoccidioides brasiliensis (strain Pb18)).